The primary structure comprises 167 residues: 2-C-methyl-D-erythritol 2,4-cyclodiphosphate synthase (167 aa).

The a divalent metal cation site is built by Asp11 and His13. 4-CDP-2-C-methyl-D-erythritol 2-phosphate contacts are provided by residues 11–13 (DIH) and 37–38 (HS). His45 provides a ligand contact to a divalent metal cation. Residues 59 to 61 (DIG), 64 to 68 (FSDTD), 103 to 109 (AQAPKMA), and Arg145 each bind 4-CDP-2-C-methyl-D-erythritol 2-phosphate.

Belongs to the IspF family. As to quaternary structure, homotrimer. It depends on a divalent metal cation as a cofactor.

The catalysed reaction is 4-CDP-2-C-methyl-D-erythritol 2-phosphate = 2-C-methyl-D-erythritol 2,4-cyclic diphosphate + CMP. It functions in the pathway isoprenoid biosynthesis; isopentenyl diphosphate biosynthesis via DXP pathway; isopentenyl diphosphate from 1-deoxy-D-xylulose 5-phosphate: step 4/6. Involved in the biosynthesis of isopentenyl diphosphate (IPP) and dimethylallyl diphosphate (DMAPP), two major building blocks of isoprenoid compounds. Catalyzes the conversion of 4-diphosphocytidyl-2-C-methyl-D-erythritol 2-phosphate (CDP-ME2P) to 2-C-methyl-D-erythritol 2,4-cyclodiphosphate (ME-CPP) with a corresponding release of cytidine 5-monophosphate (CMP). This is 2-C-methyl-D-erythritol 2,4-cyclodiphosphate synthase from Nitrosomonas eutropha (strain DSM 101675 / C91 / Nm57).